The primary structure comprises 348 residues: Holliday junction branch migration complex subunit RuvB (348 aa).

The tract at residues 4 to 186 is large ATPase domain (RuvB-L); sequence TDRIISANTA…FGIIQRLEFY (183 aa). ATP contacts are provided by residues isoleucine 25, arginine 26, glycine 67, lysine 70, threonine 71, threonine 72, 133 to 135, arginine 176, tyrosine 186, and arginine 223; that span reads EDY. Threonine 71 lines the Mg(2+) pocket. The segment at 187-257 is small ATPAse domain (RuvB-S); sequence SIDDLSKIVY…IADKALSMLK (71 aa). Residues 260-348 are head domain (RuvB-H); it reads PVGFDHMDHR…SADQQQTLSI (89 aa). DNA contacts are provided by arginine 315 and arginine 320.

It belongs to the RuvB family. As to quaternary structure, homohexamer. Forms an RuvA(8)-RuvB(12)-Holliday junction (HJ) complex. HJ DNA is sandwiched between 2 RuvA tetramers; dsDNA enters through RuvA and exits via RuvB. An RuvB hexamer assembles on each DNA strand where it exits the tetramer. Each RuvB hexamer is contacted by two RuvA subunits (via domain III) on 2 adjacent RuvB subunits; this complex drives branch migration. In the full resolvosome a probable DNA-RuvA(4)-RuvB(12)-RuvC(2) complex forms which resolves the HJ.

The protein localises to the cytoplasm. The catalysed reaction is ATP + H2O = ADP + phosphate + H(+). Its function is as follows. The RuvA-RuvB-RuvC complex processes Holliday junction (HJ) DNA during genetic recombination and DNA repair, while the RuvA-RuvB complex plays an important role in the rescue of blocked DNA replication forks via replication fork reversal (RFR). RuvA specifically binds to HJ cruciform DNA, conferring on it an open structure. The RuvB hexamer acts as an ATP-dependent pump, pulling dsDNA into and through the RuvAB complex. RuvB forms 2 homohexamers on either side of HJ DNA bound by 1 or 2 RuvA tetramers; 4 subunits per hexamer contact DNA at a time. Coordinated motions by a converter formed by DNA-disengaged RuvB subunits stimulates ATP hydrolysis and nucleotide exchange. Immobilization of the converter enables RuvB to convert the ATP-contained energy into a lever motion, pulling 2 nucleotides of DNA out of the RuvA tetramer per ATP hydrolyzed, thus driving DNA branch migration. The RuvB motors rotate together with the DNA substrate, which together with the progressing nucleotide cycle form the mechanistic basis for DNA recombination by continuous HJ branch migration. Branch migration allows RuvC to scan DNA until it finds its consensus sequence, where it cleaves and resolves cruciform DNA. The protein is Holliday junction branch migration complex subunit RuvB of Francisella tularensis subsp. tularensis (strain FSC 198).